Here is a 576-residue protein sequence, read N- to C-terminus: Sodium/proton antiporter 1 (576 aa).

A chloroplast-targeting transit peptide spans 1–60 (MAVFPIGSHFAPPHQLTKRHVIATSSPISISTRLPQNVSFSKVSGVTGSTRLSKHGVLVR). 9 helical membrane passes run 237 to 257 (TLLW…DNLT), 279 to 299 (LGGV…IGDV), 320 to 340 (FLPS…TSEV), 357 to 377 (APRG…VPVF), 379 to 399 (ALTG…LWIL), 426 to 446 (GALF…AGIL), 462 to 482 (LIAS…LVAA), 501 to 521 (LIAF…AAGV), and 541 to 561 (FAFA…NLHF).

The protein belongs to the NhaD Na(+)/H(+) (TC 2.A.62) antiporter family. As to expression, mostly expressed in mature and senescent leaves, and, to a lower extent, in seeds, roots, shoots, flowers and developing siliques.

It is found in the plastid. It localises to the chloroplast membrane. The protein resides in the chloroplast envelope. Its function is as follows. Na(+)/H(+) antiporter that extrudes sodium in exchange for external protons. This chain is Sodium/proton antiporter 1, found in Arabidopsis thaliana (Mouse-ear cress).